The sequence spans 79 residues: Hematopoietic cell signal transducer (79 aa).

Residues 1–18 (MIHPGHILFLLLLPVAAA) form the signal peptide. Over 19–34 (QTTPGSCSGCGSLSLP) the chain is Extracellular. A helical transmembrane segment spans residues 35 to 55 (LLAGLVAADAVASPLIVGAVF). Over 56–79 (LCARPRRSPAQGDGKVYINMPGRG) the chain is Cytoplasmic. Phosphotyrosine is present on Tyr-72. Residues 72–74 (YIN) form a GRB2 binding site region. Residues 72 to 75 (YINM) are PIK3R1 binding site.

The protein belongs to the DAP10 family. Homodimer; Disulfide-linked. Heterohexamer composed of four subunits of HCST/DAP10 and two subunits of KLRK1. Interacts (via transmembrane domain) with KLRK1 (via transmembrane domain); the interaction is required for KLRK1 NK cell surface and induces NK cell-mediated cytotoxicity. Interacts with PIK3R1 and GRB2. Interacts with CLEC5A. Forms an CLEC5A/TYROBP/HCST trimolecular complex depending almost solely on TYROBP. Interacts with CD300H. Phosphorylated; PIK3R1 and GRB2 associate specifically with tyrosine-phosphorylated HCST. In terms of processing, O-glycosylated.

It localises to the membrane. Its function is as follows. Transmembrane adapter protein which associates with KLRK1 to form an activation receptor KLRK1-HCST in lymphoid and myeloid cells; this receptor plays a major role in triggering cytotoxicity against target cells expressing cell surface ligands such as MHC class I chain-related MICA and MICB, and UL16-binding proteins (ULBPs); these ligands are up-regulated by stress conditions and pathological state such as viral infection and tumor transformation. Functions as a docking site for PI3-kinase PIK3R1 and GRB2. Interaction of ULBPs with KLRK1-HCST triggers calcium mobilization and activation of the PIK3R1, MAP2K/ERK, and JAK2/STAT5 signaling pathways. Both PIK3R1 and GRB2 are required for full KLRK1-HCST-mediated activation and ultimate killing of target cells. In NK cells, KLRK1-HCST signaling directly induces cytotoxicity and enhances cytokine production initiated via DAP12/TYROBP-associated receptors. In T-cells, it provides primarily costimulation for TCR-induced signals. KLRK1-HCST receptor plays a role in immune surveillance against tumors and is required for cytolysis of tumors cells; indeed, melanoma cells that do not express KLRK1 ligands escape from immune surveillance mediated by NK cells. The polypeptide is Hematopoietic cell signal transducer (HCST) (Macaca mulatta (Rhesus macaque)).